Reading from the N-terminus, the 532-residue chain is Phosphoenolpyruvate carboxykinase (ATP) (532 aa).

Positions 60, 194, and 200 each coordinate substrate. ATP contacts are provided by residues lysine 200, histidine 219, and 237-245 (GLSGTGKTT). 2 residues coordinate Mn(2+): lysine 200 and histidine 219. Aspartate 258 is a Mn(2+) binding site. Residues glutamate 286, arginine 324, and threonine 449 each contribute to the ATP site. Residue arginine 324 coordinates substrate.

This sequence belongs to the phosphoenolpyruvate carboxykinase (ATP) family. Mn(2+) is required as a cofactor.

Its subcellular location is the cytoplasm. It catalyses the reaction oxaloacetate + ATP = phosphoenolpyruvate + ADP + CO2. The protein operates within carbohydrate biosynthesis; gluconeogenesis. In terms of biological role, involved in the gluconeogenesis. Catalyzes the conversion of oxaloacetate (OAA) to phosphoenolpyruvate (PEP) through direct phosphoryl transfer between the nucleoside triphosphate and OAA. The chain is Phosphoenolpyruvate carboxykinase (ATP) from Roseobacter denitrificans (strain ATCC 33942 / OCh 114) (Erythrobacter sp. (strain OCh 114)).